Consider the following 1370-residue polypeptide: DNA-directed RNA polymerase subunit beta (1370 aa).

It belongs to the RNA polymerase beta chain family. As to quaternary structure, the RNAP catalytic core consists of 2 alpha, 1 beta, 1 beta' and 1 omega subunit. When a sigma factor is associated with the core the holoenzyme is formed, which can initiate transcription.

The enzyme catalyses RNA(n) + a ribonucleoside 5'-triphosphate = RNA(n+1) + diphosphate. Functionally, DNA-dependent RNA polymerase catalyzes the transcription of DNA into RNA using the four ribonucleoside triphosphates as substrates. This is DNA-directed RNA polymerase subunit beta from Geotalea daltonii (strain DSM 22248 / JCM 15807 / FRC-32) (Geobacter daltonii).